The chain runs to 764 residues: Protein Lines homolog 1 (764 aa).

Disordered stretches follow at residues 615–668 (SQSQ…TSLC) and 682–702 (WEEQ…SSPF). Residues 645-654 (DSSEASEEET) show a composition bias toward acidic residues. Residue Ser-650 is modified to Phosphoserine. Residues 658 to 668 (HLANSKQTSLC) show a composition bias toward polar residues. A compositionally biased stretch (low complexity) spans 691-702 (EPLLSAESSSPF).

This sequence belongs to the protein lines family.

This is Protein Lines homolog 1 from Mus musculus (Mouse).